A 301-amino-acid chain; its full sequence is MSEPVAPDGAQPAPAGATPQPLQPIAGDRPATRTVFIVSDGTGITAETFSHSILAQFEMRFRKVRMPFVDTPEKAHIAVGKINEAFHTEGVPPIVFTTLVNQEANKALRRAKAMILDMFQTFIEPLEKELGLKSTHAIGRFHQNADTEAYKNRIEAINFSLAHDDGQSHKNLQEADVILVGVSRSGKTPTSLYLAMQYGLKAANYPLIPDDFERGKLPKALYDYKPKIFGLSIDPQRLTEIRNERRPGSKYAAIENCRYEVNEAEAMMRREGIKWLSSTHKSIEEIATTILQEIKVDRDNY.

Over residues 1 to 24 the composition is skewed to low complexity; it reads MSEPVAPDGAQPAPAGATPQPLQP. A disordered region spans residues 1-27; that stretch reads MSEPVAPDGAQPAPAGATPQPLQPIAG. 181–188 contacts ADP; it reads GVSRSGKT.

The protein belongs to the pyruvate, phosphate/water dikinase regulatory protein family. PSRP subfamily.

The enzyme catalyses [pyruvate, water dikinase] + ADP = [pyruvate, water dikinase]-phosphate + AMP + H(+). It carries out the reaction [pyruvate, water dikinase]-phosphate + phosphate + H(+) = [pyruvate, water dikinase] + diphosphate. Bifunctional serine/threonine kinase and phosphorylase involved in the regulation of the phosphoenolpyruvate synthase (PEPS) by catalyzing its phosphorylation/dephosphorylation. This is Putative phosphoenolpyruvate synthase regulatory protein from Cupriavidus pinatubonensis (strain JMP 134 / LMG 1197) (Cupriavidus necator (strain JMP 134)).